Reading from the N-terminus, the 383-residue chain is 8-amino-7-oxononanoate synthase (383 aa).

R22 lines the substrate pocket. Pyridoxal 5'-phosphate is bound at residue 109-110; that stretch reads GF. H134 contributes to the substrate binding site. Pyridoxal 5'-phosphate-binding residues include S178, H206, and T232. K235 bears the N6-(pyridoxal phosphate)lysine mark. Substrate is bound at residue T348.

Belongs to the class-II pyridoxal-phosphate-dependent aminotransferase family. BioF subfamily. In terms of assembly, homodimer. Pyridoxal 5'-phosphate is required as a cofactor.

The catalysed reaction is 6-carboxyhexanoyl-[ACP] + L-alanine + H(+) = (8S)-8-amino-7-oxononanoate + holo-[ACP] + CO2. It functions in the pathway cofactor biosynthesis; biotin biosynthesis. Catalyzes the decarboxylative condensation of pimeloyl-[acyl-carrier protein] and L-alanine to produce 8-amino-7-oxononanoate (AON), [acyl-carrier protein], and carbon dioxide. The protein is 8-amino-7-oxononanoate synthase of Vibrio campbellii (strain ATCC BAA-1116).